Here is a 1022-residue protein sequence, read N- to C-terminus: Protein translocase subunit SECA1, chloroplastic (1022 aa).

A chloroplast-targeting transit peptide spans 1–72 (MVSPLCDSQL…SRKRSTSVNA (72 aa)). N-acetylserine is present on S73. 176–183 (MRTGEGKT) contributes to the ATP binding site. A disordered region spans residues 985–1022 (KDEEKKSQNGKPSKQVDNASEKPKQVGVTDEPSSIASA). The span at 993–1002 (NGKPSKQVDN) shows a compositional bias: polar residues.

The protein belongs to the SecA family. As to quaternary structure, part of the Sec protein translocation apparatus. Interacts probably with SCY1. As to expression, expressed in green tissues, including cotyledons, rosette and cauline leaves, and sepals. Also detected at the base and the tip of the trichome.

It localises to the plastid. Its subcellular location is the chloroplast stroma. The protein resides in the chloroplast thylakoid membrane. The enzyme catalyses ATP + H2O + chloroplast-proteinSide 1 = ADP + phosphate + chloroplast-proteinSide 2.. In terms of biological role, has a central role in coupling the hydrolysis of ATP to the transfer of proteins across the thylakoid membrane. Involved in photosynthetic acclimation and required for chloroplast biogenesis. In Arabidopsis thaliana (Mouse-ear cress), this protein is Protein translocase subunit SECA1, chloroplastic.